The chain runs to 793 residues: MGVWLSKDDYIRDLKRIILCFLIVYMAILVGTEQDFYSLLGVSKTASSREIRQAFKKLALKLHPDKNPNNPNAHGNFLKINRAYEVLKDEDLRKKYDKYGEKGLEDNQGGQYESWNYYRYDFGIYDDDPEIITLERREFDAAVNSGELWFVNFYSPGCSHCHDLAPTWRDFAKEVDGLLRIGAVNCGDDRMLCRMKGVNSYPSLFIFRSGMAPVKYHGDRSKESLVSFAMQHVRSTVTELWTGNFVNSIQTAFAAGIGWLITFCSKGGDCLTSQTRLRLSGMLDGLVNVGWMDCATQDNLCKSLDITTSTTAYFPPGATLNNKEKNSILFLNSLDAKEIYLEVIHNLPDFELLSAHTLEDRLAHHRWLLFFHFGKNENSNDPELKKLKTLLKNDHIQVGRFDCSSAPDICSNLYVFQPSLAVFKGQGTKEYEIHHGKKILYDILAFAKESVNSHVTTLGPQNFPANDKEPWLVDFFAPWCPPCRALLPELRRASNLLYGQLKFGTLDCTVHEGLCNMYNIQAYPTTVVFNQSNIHEYEGHHSAEQILEFIEDLMNPSVVSLTPTTFNELVTQRKHNEVWMVDFYSPWCHPCQVLMPEWKRMARTLTGLINVGSIDCQQYHSFCAQENVQRYPEIRFFPPKSNKAYQYHSYNGWNRDAYSLRIWGLGFLPQVSTGLTPQTFSEKVLQGKNHWVIDFYAPWCGPCQNFAPEFELLARMIKGKVKAGKVDCQAYAQTCQKAGIRAYPTVKFYFYESAKRTFQEEQINIRDAKAIAALINEKLETLQNQGKRNKDEL.

The N-terminal stretch at 1-32 (MGVWLSKDDYIRDLKRIILCFLIVYMAILVGT) is a signal peptide. Positions 35 to 100 (DFYSLLGVSK…DLRKKYDKYG (66 aa)) constitute a J domain. Residues 130 to 232 (EIITLERREF…ESLVSFAMQH (103 aa)) form the Thioredoxin 1 domain. An intrachain disulfide couples Cys158 to Cys161. Trxb stretches follow at residues 235–350 (STVT…LPDF) and 348–463 (PDFE…PQNF). Thioredoxin domains are found at residues 454-553 (HVTT…IEDL), 557-662 (SVVS…SLRI), and 671-778 (VSTG…INEK). Residues Cys480 and Cys483 are joined by a disulfide bond. N-linked (GlcNAc...) asparagine glycosylation occurs at Asn530. Disulfide bonds link Cys588–Cys591 and Cys700–Cys703. Residues 790–793 (KDEL) carry the Prevents secretion from ER motif.

Interacts with HSPA5 (via its J domain). Interacts with EDEM1.

The protein localises to the endoplasmic reticulum lumen. Functionally, endoplasmic reticulum disulfide reductase involved both in the correct folding of proteins and degradation of misfolded proteins. Required for efficient folding of proteins in the endoplasmic reticulum by catalyzing the removal of non-native disulfide bonds formed during the folding of proteins, such as LDLR. Also involved in endoplasmic reticulum-associated degradation (ERAD) by reducing incorrect disulfide bonds in misfolded glycoproteins recognized by EDEM1. Interaction with HSPA5 is required its activity, not for the disulfide reductase activity, but to facilitate the release of DNAJC10 from its substrate. Promotes apoptotic signaling pathway in response to endoplasmic reticulum stress. This Pongo abelii (Sumatran orangutan) protein is DnaJ homolog subfamily C member 10 (DNAJC10).